The following is a 45-amino-acid chain: uncharacterized protein (45 aa).

This is an uncharacterized protein from Dictyostelium discoideum (Social amoeba).